Reading from the N-terminus, the 84-residue chain is Large ribosomal subunit protein bL27 (84 aa).

The interval 1-22 (MAHKKGGGSTKNGRDSNPKYLG) is disordered.

It belongs to the bacterial ribosomal protein bL27 family.

The chain is Large ribosomal subunit protein bL27 from Prosthecochloris aestuarii (strain DSM 271 / SK 413).